Reading from the N-terminus, the 360-residue chain is Aurora kinase B (360 aa).

The 251-residue stretch at 93–343 (FDIGRPLGKG…LKGVMEHPWV (251 aa)) folds into the Protein kinase domain. ATP contacts are provided by residues 99–107 (LGKGKFGNV) and Lys-122. The active-site Proton acceptor is Asp-216.

Belongs to the protein kinase superfamily. Ser/Thr protein kinase family. Aurora subfamily. Component of the chromosomal passenger complex (CPC).

The protein resides in the nucleus. It is found in the chromosome. The protein localises to the centromere. It localises to the cytoplasm. Its subcellular location is the cytoskeleton. The protein resides in the spindle. It is found in the midbody. It carries out the reaction L-seryl-[protein] + ATP = O-phospho-L-seryl-[protein] + ADP + H(+). The enzyme catalyses L-threonyl-[protein] + ATP = O-phospho-L-threonyl-[protein] + ADP + H(+). With respect to regulation, kinase activity is stimulated by cell-cycle specific phosphorylation. In terms of biological role, serine/threonine-protein kinase component of the chromosomal passenger complex (CPC), a complex that acts as a key regulator of mitosis. The CPC complex has essential functions at the centromere in ensuring correct chromosome alignment and segregation and is required for chromatin-induced microtubule stabilization and spindle assembly. Involved in the bipolar attachment of spindle microtubules to kinetochores and is a key regulator for the onset of cytokinesis during mitosis. Required for central/midzone spindle assembly and cleavage furrow formation. Key component of the cytokinesis checkpoint, a process required to delay abscission to prevent both premature resolution of intercellular chromosome bridges and accumulation of DNA damage. Phosphorylates 'Ser-10' of histone H3 during mitosis. In Xenopus tropicalis (Western clawed frog), this protein is Aurora kinase B.